The following is a 133-amino-acid chain: uncharacterized protein (133 aa).

To E.coli ydcQ.

This is an uncharacterized protein from Haemophilus phage HP1 (strain HP1c1) (Bacteriophage HP1).